Here is a 61-residue protein sequence, read N- to C-terminus: Large ribosomal subunit protein eL24 (61 aa).

Zn(2+)-binding residues include cysteine 7, cysteine 10, cysteine 33, and cysteine 37. The C4-type zinc-finger motif lies at 7 to 37 (CSFCGHEIPPGTGLMYVRNDGTILWFCSSKC).

Belongs to the eukaryotic ribosomal protein eL24 family. As to quaternary structure, part of the 50S ribosomal subunit. Forms a cluster with proteins L3 and L14. Zn(2+) serves as cofactor.

In terms of biological role, binds to the 23S rRNA. In Saccharolobus islandicus (strain Y.N.15.51 / Yellowstone #2) (Sulfolobus islandicus), this protein is Large ribosomal subunit protein eL24.